Consider the following 440-residue polypeptide: 3-phosphoshikimate 1-carboxyvinyltransferase (440 aa).

Lys26, Ser27, and Arg31 together coordinate 3-phosphoshikimate. Lys26 provides a ligand contact to phosphoenolpyruvate. Residues Gly99 and Arg127 each coordinate phosphoenolpyruvate. 3-phosphoshikimate contacts are provided by Ser172, Gln174, Asp320, and Lys347. Gln174 contributes to the phosphoenolpyruvate binding site. Asp320 acts as the Proton acceptor in catalysis. Positions 351 and 392 each coordinate phosphoenolpyruvate.

The protein belongs to the EPSP synthase family. Monomer.

Its subcellular location is the cytoplasm. It carries out the reaction 3-phosphoshikimate + phosphoenolpyruvate = 5-O-(1-carboxyvinyl)-3-phosphoshikimate + phosphate. The protein operates within metabolic intermediate biosynthesis; chorismate biosynthesis; chorismate from D-erythrose 4-phosphate and phosphoenolpyruvate: step 6/7. Catalyzes the transfer of the enolpyruvyl moiety of phosphoenolpyruvate (PEP) to the 5-hydroxyl of shikimate-3-phosphate (S3P) to produce enolpyruvyl shikimate-3-phosphate and inorganic phosphate. The sequence is that of 3-phosphoshikimate 1-carboxyvinyltransferase from Xanthomonas axonopodis pv. citri (strain 306).